A 235-amino-acid polypeptide reads, in one-letter code: Purine nucleoside phosphorylase DeoD-type (235 aa).

H4 is a binding site for a purine D-ribonucleoside. Phosphate contacts are provided by residues G20, R24, R43, and 87 to 90; that span reads RVGT. Residues 179-181 and 203-204 each bind a purine D-ribonucleoside; these read EME and SD. D204 acts as the Proton donor in catalysis.

The protein belongs to the PNP/UDP phosphorylase family. Homohexamer; trimer of homodimers.

It carries out the reaction a purine D-ribonucleoside + phosphate = a purine nucleobase + alpha-D-ribose 1-phosphate. The catalysed reaction is a purine 2'-deoxy-D-ribonucleoside + phosphate = a purine nucleobase + 2-deoxy-alpha-D-ribose 1-phosphate. Its function is as follows. Catalyzes the reversible phosphorolytic breakdown of the N-glycosidic bond in the beta-(deoxy)ribonucleoside molecules, with the formation of the corresponding free purine bases and pentose-1-phosphate. This Clostridium perfringens (strain SM101 / Type A) protein is Purine nucleoside phosphorylase DeoD-type.